The sequence spans 465 residues: FAD-dependent monooxygenase pyr5 (465 aa).

A signal peptide spans 1–16 (MRVLIIGGSIAGLTLA). FAD contacts are provided by Glu-30, Gly-44, and Arg-103. Tyr-210 is an active-site residue. FAD contacts are provided by Asp-306 and Ala-319. A helical transmembrane segment spans residues 440 to 456 (PTFPLTVAGLCLVAIVI).

Belongs to the paxM FAD-dependent monooxygenase family. It depends on FAD as a cofactor.

Its subcellular location is the membrane. It carries out the reaction 4-hydroxy-3-[(2E,6E)-farnesyl]-6-(pyridin-3-yl)-2H-pyran-2-one + NADPH + O2 + H(+) = 2-oxo-3-[(8S)-epoxy-(2E,6E)-farnesyl]-6-(pyridin-3-yl)-2H-pyran-4-olate + NADP(+) + H2O. The protein operates within secondary metabolite biosynthesis; terpenoid biosynthesis. Its function is as follows. FAD-dependent monooxygenase; part of the gene cluster that mediates the biosynthesis of pyripyropene A, a specific human acyl-coenzyme A:cholesterol acyltransferase 2 inhibitor. The first step of the pathway is the synthesis of nicotinyl-CoA from nicotinic acid by the nicotinic acid-CoA ligase pyr1. Nicotinyl-CoA is then a substrate of polyketide synthase pyr2 to produce 4-hydroxy-6-(3-pyridinyl)-2H-pyran-2-one (HPPO) which is further prenylated by the polyprenyl transferase pyr6 to yield farnesyl-HPPO. The next steps consist of an epoxidation of farnesyl-HPPO to epoxyfarnesyl-HPPO by FAD-dependent monooxygenase pyr5 and a cyclization of the terpenoid portion by the terpene cyclase pyr4 to yield deacetyl-pyripyropene E. The 2 cytochrome P450 monooxygenases pyr3 and pyr9, and the 2 acetyltransferases pyr7 and pyr8 are involved in the conversion of deacetyl-pyripyropene E into pyripyropene A through several cycles of oxidation and acetylation steps. Pyr7 acetylates deacetyl-pyripyropene E to pyripyropene E which is oxidized to 11-deacetyl-pyripyropene O by pyr3, which is in turn acetylated into pyripyropene O by pyr8. Pyripyropene O is then oxidized to deacetyl-pyripyropene A by pyr9. Deacetyl-pyripyropene A is finally acetylated to pyripyropene A by pyr8. The protein is FAD-dependent monooxygenase pyr5 of Aspergillus fumigatus (strain ATCC MYA-4609 / CBS 101355 / FGSC A1100 / Af293) (Neosartorya fumigata).